Consider the following 343-residue polypeptide: Heat-inducible transcription repressor HrcA (343 aa).

The protein belongs to the HrcA family.

Functionally, negative regulator of class I heat shock genes (grpE-dnaK-dnaJ and groELS operons). Prevents heat-shock induction of these operons. This is Heat-inducible transcription repressor HrcA from Thermobifida fusca (strain YX).